Here is a 398-residue protein sequence, read N- to C-terminus: Ureide permease 2 (398 aa).

Residues 1 to 10 are Extracellular-facing; sequence MYLVESKGGA. The helical transmembrane segment at 11-31 threads the bilayer; sequence IACMLLALLSLGTWPAVLTLL. Over 32 to 44 the chain is Cytoplasmic; it reads ERRGRLPQHTYLD. Residues 45–65 traverse the membrane as a helical segment; the sequence is YSITNLLAAIIIAFTFGQIGS. Residues 66 to 81 are Extracellular-facing; it reads TKPDSPNFITQLAQDN. Residues 82-102 form a helical membrane-spanning segment; sequence WPSVMFAMAGGIVLSLGNLST. At 103 to 104 the chain is on the cytoplasmic side; that stretch reads QY. The helical transmembrane segment at 105 to 125 threads the bilayer; sequence AWALVGLSVTEVITSSITVVI. The Extracellular segment spans residues 126–139; sequence GSTLNYFLDDKINK. The chain crosses the membrane as a helical span at residues 140–160; it reads AEILFPGVACFLIAVCLGSAV. Over 161–229 the chain is Cytoplasmic; that stretch reads HRSNADDNKA…RAIKVFGKRK (69 aa). The interval 176–200 is disordered; it reads ETAKQEASGPSTEIGTNSSKDLETN. Residues 183–200 are compositionally biased toward polar residues; the sequence is SGPSTEIGTNSSKDLETN. ATP is bound at residue 221–228; that stretch reads AIKVFGKR. Residues 230 to 250 form a helical membrane-spanning segment; that stretch reads IIGLAITFFAGLCFSLFSPAF. At 251 to 272 the chain is on the extracellular side; it reads NLATNDQWNRLKQGVPKLVVYT. Residues 273 to 293 traverse the membrane as a helical segment; the sequence is AFFYFSVSCFIIALILNVVFL. Residues 294–315 lie on the Cytoplasmic side of the membrane; the sequence is YYPVLGLPKSSFKAYLNDWNGR. Residues 316–336 traverse the membrane as a helical segment; sequence YWAFLAGFLCGFGNGLQFMGG. The Extracellular portion of the chain corresponds to 337–341; the sequence is QAAGY. The chain crosses the membrane as a helical span at residues 342–362; that stretch reads AAADSVQALPLVSTFWGVVLF. Residues 363-371 lie on the Cytoplasmic side of the membrane; the sequence is GEYRRSSRK. A helical membrane pass occupies residues 372-392; it reads TYLLLFCMLFMFISAVAVLMA. The Extracellular segment spans residues 393 to 398; that stretch reads SSGHRK.

It belongs to the plant ureide permease (TC 2.A.7.19) family. As to expression, expressed in root xylem, cotyledons and leaves. Expressed in leaf blades, petioles, trichomes, stems, flower stigma, the upper part of pedicels, sepals, and the top and bottom parts of carpels in siliques.

The protein localises to the membrane. In terms of biological role, proton-coupled transporter that transports a wide spectrum of oxo derivatives of heterocyclic nitrogen compounds, including allantoin, uric acid and xanthine, but not adenine. Mediates high affinity transport of uracil and 5-fluorouracil (a toxic uracil analog). Mediates transport of free pyrimidines and may function during early seedling development in salvage pathways, by the utilization of pyrimidines from seed storage tissue. The sequence is that of Ureide permease 2 from Arabidopsis thaliana (Mouse-ear cress).